The chain runs to 444 residues: Ribosomal protein uS12 methylthiotransferase RimO (444 aa).

The MTTase N-terminal domain maps to 2–118 (PSIGLLSLGC…IVEVVNHALE (117 aa)). Residues cysteine 11, cysteine 47, cysteine 81, cysteine 156, cysteine 160, and cysteine 163 each contribute to the [4Fe-4S] cluster site. The region spanning 142-372 (STPSYTAYVK…MKLQREISLS (231 aa)) is the Radical SAM core domain. In terms of domain architecture, TRAM spans 375-444 (QKRIGQEIEV…EYDLMGELAQ (70 aa)).

The protein belongs to the methylthiotransferase family. RimO subfamily. [4Fe-4S] cluster serves as cofactor.

It localises to the cytoplasm. The enzyme catalyses L-aspartate(89)-[ribosomal protein uS12]-hydrogen + (sulfur carrier)-SH + AH2 + 2 S-adenosyl-L-methionine = 3-methylsulfanyl-L-aspartate(89)-[ribosomal protein uS12]-hydrogen + (sulfur carrier)-H + 5'-deoxyadenosine + L-methionine + A + S-adenosyl-L-homocysteine + 2 H(+). Catalyzes the methylthiolation of an aspartic acid residue of ribosomal protein uS12. This chain is Ribosomal protein uS12 methylthiotransferase RimO, found in Desulforamulus reducens (strain ATCC BAA-1160 / DSM 100696 / MI-1) (Desulfotomaculum reducens).